A 236-amino-acid polypeptide reads, in one-letter code: Large ribosomal subunit protein uL3 (236 aa).

Disordered regions lie at residues 132-153 (SNRA…GMAQ) and 200-236 (KGGD…KKGG). Residues 133-145 (NRASHGNSRSHNV) show a composition bias toward polar residues. An N5-methylglutamine modification is found at Gln-153. Polar residues predominate over residues 206–216 (VSPSIRSARPT). Residues 217–228 (NNGNVNAAAKGG) show a composition bias toward low complexity.

The protein belongs to the universal ribosomal protein uL3 family. As to quaternary structure, part of the 50S ribosomal subunit. Forms a cluster with proteins L14 and L19. Methylated by PrmB.

One of the primary rRNA binding proteins, it binds directly near the 3'-end of the 23S rRNA, where it nucleates assembly of the 50S subunit. The protein is Large ribosomal subunit protein uL3 of Nitrosospira multiformis (strain ATCC 25196 / NCIMB 11849 / C 71).